We begin with the raw amino-acid sequence, 471 residues long: Eremophilane O-acetyltransferase prx11 (471 aa).

The protein belongs to the fumigaclavine B O-acetyltransferase family. In terms of assembly, monomer.

It functions in the pathway sesquiterpene biosynthesis. Functionally, O-acetyltransferase; part of the gene cluster that mediates the biosynthesis of PR-toxin, a bicyclic sesquiterpene belonging to the eremophilane class and acting as a mycotoxin. The first step of the pathway is catalyzed by the aristolochene synthase which performs the cyclization of trans,trans-farnesyl diphosphate (FPP) to the bicyclic sesquiterpene aristolochene. Following the formation of aristolochene, the non-oxygenated aristolochene is converted to the trioxygenated intermediate eremofortin B, via 7-epi-neopetasone. This conversion appears to involve three enzymes, a hydroxysterol oxidase-like enzyme, the quinone-oxidase prx3 that forms the quinone-type-structure in the bicyclic nucleus of aristolochene with the C8-oxo group and the C-3 hydroxyl group, and the P450 monooxygenase prx9 that introduces the epoxide at the double bond between carbons 1 and 2. No monoxy or dioxy-intermediates have been reported to be released to the broth, so these three early oxidative reactions may be coupled together. Eremofortin B is further oxidized by another P450 monooxygenase, that introduces a second epoxide between carbons 7 and 11 prior to acetylation to eremofortin A by the acetyltransferase prx11. The second epoxidation may be performed by a second P450 monooxygenase. After the acetylation step, eremofortin A is converted to eremofortin C and then to PR-toxin. First the conversion of eremofortin A to eremofortin C proceeds by oxidation of the side chain of the molecule at C-12 and is catalyzed by the short-chain oxidoreductase prx1. The cytochrome P450 monooxygenase prx8 also plays a role in this step. The primary alcohol formed at C-12 is finally oxidized by the short-chain alcohol dehydrogenase prx4 that forms PR-toxin. In Penicillium rubens (strain ATCC 28089 / DSM 1075 / NRRL 1951 / Wisconsin 54-1255) (Penicillium chrysogenum), this protein is Eremophilane O-acetyltransferase prx11.